Here is a 693-residue protein sequence, read N- to C-terminus: Elongation factor G (693 aa).

One can recognise a tr-type G domain in the interval 9–283 (ERVRNIGIIA…AVCDYLPSPV (275 aa)). GTP contacts are provided by residues 18 to 25 (AHIDAGKT), 82 to 86 (DTPGH), and 136 to 139 (NKMD).

This sequence belongs to the TRAFAC class translation factor GTPase superfamily. Classic translation factor GTPase family. EF-G/EF-2 subfamily.

It localises to the cytoplasm. Functionally, catalyzes the GTP-dependent ribosomal translocation step during translation elongation. During this step, the ribosome changes from the pre-translocational (PRE) to the post-translocational (POST) state as the newly formed A-site-bound peptidyl-tRNA and P-site-bound deacylated tRNA move to the P and E sites, respectively. Catalyzes the coordinated movement of the two tRNA molecules, the mRNA and conformational changes in the ribosome. In Dehalococcoides mccartyi (strain ATCC BAA-2266 / KCTC 15142 / 195) (Dehalococcoides ethenogenes (strain 195)), this protein is Elongation factor G.